Reading from the N-terminus, the 488-residue chain is Glutamyl-tRNA(Gln) amidotransferase subunit A (488 aa).

Residues Lys77 and Ser152 each act as charge relay system in the active site. Ser176 functions as the Acyl-ester intermediate in the catalytic mechanism.

This sequence belongs to the amidase family. GatA subfamily. As to quaternary structure, heterotrimer of A, B and C subunits.

It catalyses the reaction L-glutamyl-tRNA(Gln) + L-glutamine + ATP + H2O = L-glutaminyl-tRNA(Gln) + L-glutamate + ADP + phosphate + H(+). Allows the formation of correctly charged Gln-tRNA(Gln) through the transamidation of misacylated Glu-tRNA(Gln) in organisms which lack glutaminyl-tRNA synthetase. The reaction takes place in the presence of glutamine and ATP through an activated gamma-phospho-Glu-tRNA(Gln). In Streptococcus pneumoniae (strain Hungary19A-6), this protein is Glutamyl-tRNA(Gln) amidotransferase subunit A.